The sequence spans 234 residues: UDP-2,3-diacylglucosamine hydrolase (234 aa).

Mn(2+)-binding residues include Asp9, His11, Asp42, Asn80, and His115. 80–81 (NR) serves as a coordination point for substrate. Asp123, Ser161, Lys165, Lys168, and His196 together coordinate substrate. Mn(2+) contacts are provided by His196 and His198.

This sequence belongs to the LpxH family. The cofactor is Mn(2+).

It localises to the cell inner membrane. The enzyme catalyses UDP-2-N,3-O-bis[(3R)-3-hydroxytetradecanoyl]-alpha-D-glucosamine + H2O = 2-N,3-O-bis[(3R)-3-hydroxytetradecanoyl]-alpha-D-glucosaminyl 1-phosphate + UMP + 2 H(+). It participates in glycolipid biosynthesis; lipid IV(A) biosynthesis; lipid IV(A) from (3R)-3-hydroxytetradecanoyl-[acyl-carrier-protein] and UDP-N-acetyl-alpha-D-glucosamine: step 4/6. Functionally, hydrolyzes the pyrophosphate bond of UDP-2,3-diacylglucosamine to yield 2,3-diacylglucosamine 1-phosphate (lipid X) and UMP by catalyzing the attack of water at the alpha-P atom. Involved in the biosynthesis of lipid A, a phosphorylated glycolipid that anchors the lipopolysaccharide to the outer membrane of the cell. The sequence is that of UDP-2,3-diacylglucosamine hydrolase from Histophilus somni (strain 2336) (Haemophilus somnus).